The following is a 311-amino-acid chain: MAVQGGLLSLWLWLWLSLLTVLLGARARWRGEGTTPHLQSIFLGRCAEYTTLLSLGNKNCTAIWEAFKGVLDKDPCSVLPSDYDLFINLSRHPIPRDKSLFWENNHLLVMSYGENTRRLVALCDVLYGKVGDFLSWCRQENASGLDYQSCPTSEDCENNAVDSYWKSASMQYSRDSSGVINVMLNGSEPKGAYPTRGFFADFEIPYLQKDKVTRIEIWVMHDVGGPNVESCGEGSVKILEDRLEALGFQHSCINDYRPVKFLMCVDHSTHPDCIMNSASASMRRESASLHAIGDASLLISLLVALASSSQA.

Positions 1-24 are cleaved as a signal peptide; sequence MAVQGGLLSLWLWLWLSLLTVLLG. 3 cysteine pairs are disulfide-bonded: Cys-46/Cys-60, Cys-76/Cys-156, and Cys-137/Cys-150. N-linked (GlcNAc...) asparagine glycosylation is found at Asn-59 and Asn-88. Position 102 (Trp-102) interacts with NAD(+). Trp-102 is a nicotinamide binding site. Asn-141 carries an N-linked (GlcNAc...) asparagine glycan. Trp-165 provides a ligand contact to NAD(+). The N-linked (GlcNAc...) asparagine glycan is linked to Asn-185. Glu-203 contacts NAD(+). 2 disulfides stabilise this stretch: Cys-231/Cys-252 and Cys-264/Cys-273. A lipid anchor (GPI-anchor amidated serine) is attached at Ser-286. Positions 287 to 311 are excised as a propeptide; sequence ASLHAIGDASLLISLLVALASSSQA.

This sequence belongs to the ADP-ribosyl cyclase family. In terms of assembly, homodimer. Expressed in the bone marrow, spleen and thymus in lymphoid organs, and the lung, kidney and heart in non-lymphoid organs.

Its subcellular location is the cell membrane. It carries out the reaction NAD(+) + H2O = ADP-D-ribose + nicotinamide + H(+). It catalyses the reaction NAD(+) = cyclic ADP-beta-D-ribose + nicotinamide + H(+). The enzyme catalyses cyclic ADP-beta-D-ribose + H2O = ADP-D-ribose. In terms of biological role, catalyzes both the synthesis of cyclic ADP-beta-D-ribose (cADPR) from NAD(+), and its hydrolysis to ADP-D-ribose (ADPR). Cyclic ADPR is known to serve as an endogenous second messenger that elicits calcium release from intracellular stores, and thus regulates the mobilization of intracellular calcium. May be involved in pre-B-cell growth. The polypeptide is ADP-ribosyl cyclase/cyclic ADP-ribose hydrolase 2 (Bst1) (Mus musculus (Mouse)).